We begin with the raw amino-acid sequence, 315 residues long: 6-phosphogluconolactonase-like protein 2 (315 aa).

Phosphoserine is present on residues S42 and S64. The tract at residues C59 to E85 is disordered. The segment covering K60–S70 has biased composition (low complexity).

This sequence belongs to the glucosamine/galactosamine-6-phosphate isomerase family. 6-phosphogluconolactonase subfamily.

The protein resides in the cytoplasm. Functionally, may be involved in regulation of tRNA subcellular distribution. The polypeptide is 6-phosphogluconolactonase-like protein 2 (SOL2) (Saccharomyces cerevisiae (strain ATCC 204508 / S288c) (Baker's yeast)).